The sequence spans 173 residues: Alpha-crystallin A chain (173 aa).

Met1 is modified (N-acetylmethionine). The required for complex formation with BFSP1 and BFSP2 stretch occupies residues Met1 to Glu63. At Gln6 the chain carries Deamidated glutamine; partial. Ser45 bears the Phosphoserine mark. Gln50 bears the Deamidated glutamine; partial mark. The region spanning Leu52–Ser162 is the sHSP domain. Lys70 carries the post-translational modification N6-acetyllysine. Gln90 is subject to Deamidated glutamine; partial. At Lys99 the chain carries N6-acetyllysine. His100 lines the Zn(2+) pocket. The residue at position 101 (Asn101) is a Deamidated asparagine; partial. 2 residues coordinate Zn(2+): Glu102 and His107. At Ser122 the chain carries Phosphoserine. Residue Asn123 is modified to Deamidated asparagine; partial. Positions Pro144–Ser173 are disordered. Basic and acidic residues predominate over residues Gly153–Pro167. His154 contacts Zn(2+). A glycan (O-linked (GlcNAc) serine) is linked at Ser162.

Belongs to the small heat shock protein (HSP20) family. As to quaternary structure, heteromer composed of three CRYAA and one CRYAB subunits. Inter-subunit bridging via zinc ions enhances stability, which is crucial as there is no protein turn over in the lens. Can also form homodimers and homotetramers (dimers of dimers) which serve as the building blocks of homooligomers. Within homooligomers, the zinc-binding motif is created from residues of 3 different molecules. His-100 and Glu-102 from one molecule are ligands of the zinc ion, and His-107 and His-154 residues from additional molecules complete the site with tetrahedral coordination geometry. Part of a complex required for lens intermediate filament formation composed of BFSP1, BFSP2 and CRYAA. Acetylation at Lys-70 may increase chaperone activity. In terms of processing, undergoes age-dependent proteolytical cleavage at the C-terminus.

The protein resides in the cytoplasm. Its subcellular location is the nucleus. Contributes to the transparency and refractive index of the lens. Acts as a chaperone, preventing aggregation of various proteins under a wide range of stress conditions. Required for the correct formation of lens intermediate filaments as part of a complex composed of BFSP1, BFSP2 and CRYAA. This chain is Alpha-crystallin A chain (CRYAA), found in Ovis aries (Sheep).